Consider the following 466-residue polypeptide: Asparagine--tRNA ligase (466 aa).

The protein belongs to the class-II aminoacyl-tRNA synthetase family. Homodimer.

The protein resides in the cytoplasm. The enzyme catalyses tRNA(Asn) + L-asparagine + ATP = L-asparaginyl-tRNA(Asn) + AMP + diphosphate + H(+). The polypeptide is Asparagine--tRNA ligase (Vibrio vulnificus (strain YJ016)).